Consider the following 83-residue polypeptide: Exodeoxyribonuclease 7 small subunit (83 aa).

The protein belongs to the XseB family. As to quaternary structure, heterooligomer composed of large and small subunits.

Its subcellular location is the cytoplasm. It catalyses the reaction Exonucleolytic cleavage in either 5'- to 3'- or 3'- to 5'-direction to yield nucleoside 5'-phosphates.. In terms of biological role, bidirectionally degrades single-stranded DNA into large acid-insoluble oligonucleotides, which are then degraded further into small acid-soluble oligonucleotides. The chain is Exodeoxyribonuclease 7 small subunit from Rhizobium meliloti (strain 1021) (Ensifer meliloti).